Consider the following 360-residue polypeptide: Photosystem II protein D1 3 (360 aa).

3 helical membrane passes run 29–46 (YVGW…TATI), 118–133 (HFLL…QWEL), and 142–156 (WICV…AAFA). Histidine 118 is a binding site for chlorophyll a. Pheophytin a is bound at residue tyrosine 126. 2 residues coordinate [CaMn4O5] cluster: aspartate 170 and glutamate 189. The helical transmembrane segment at 197 to 218 (FHMLGVAGVFGGSLFSAMHGSL) threads the bilayer. Residue histidine 198 coordinates chlorophyll a. A quinone is bound by residues histidine 215 and 264–265 (SF). Residue histidine 215 coordinates Fe cation. Histidine 272 serves as a coordination point for Fe cation. The chain crosses the membrane as a helical span at residues 274–288 (FLGAWPVVGIWFTSM). 4 residues coordinate [CaMn4O5] cluster: histidine 332, glutamate 333, aspartate 342, and alanine 344. Residues 345–360 (AGEATPVALTAPSIHG) constitute a propeptide that is removed on maturation.

It belongs to the reaction center PufL/M/PsbA/D family. PSII is composed of 1 copy each of membrane proteins PsbA, PsbB, PsbC, PsbD, PsbE, PsbF, PsbH, PsbI, PsbJ, PsbK, PsbL, PsbM, PsbT, PsbX, PsbY, PsbZ, Psb30/Ycf12, peripheral proteins PsbO, CyanoQ (PsbQ), PsbU, PsbV and a large number of cofactors. It forms dimeric complexes. Requires The D1/D2 heterodimer binds P680, chlorophylls that are the primary electron donor of PSII, and subsequent electron acceptors. It shares a non-heme iron and each subunit binds pheophytin, quinone, additional chlorophylls, carotenoids and lipids. D1 provides most of the ligands for the Mn4-Ca-O5 cluster of the oxygen-evolving complex (OEC). There is also a Cl(-1) ion associated with D1 and D2, which is required for oxygen evolution. The PSII complex binds additional chlorophylls, carotenoids and specific lipids. as cofactor. In terms of processing, tyr-161 forms a radical intermediate that is referred to as redox-active TyrZ, YZ or Y-Z. C-terminally processed by CtpA; processing is essential to allow assembly of the oxygen-evolving complex and thus photosynthetic growth.

The protein localises to the cellular thylakoid membrane. The enzyme catalyses 2 a plastoquinone + 4 hnu + 2 H2O = 2 a plastoquinol + O2. Its function is as follows. Photosystem II (PSII) is a light-driven water:plastoquinone oxidoreductase that uses light energy to abstract electrons from H(2)O, generating O(2) and a proton gradient subsequently used for ATP formation. It consists of a core antenna complex that captures photons, and an electron transfer chain that converts photonic excitation into a charge separation. The D1/D2 (PsbA/PsbD) reaction center heterodimer binds P680, the primary electron donor of PSII as well as several subsequent electron acceptors. This Synechococcus sp. (strain ATCC 27144 / PCC 6301 / SAUG 1402/1) (Anacystis nidulans) protein is Photosystem II protein D1 3.